The sequence spans 57 residues: uncharacterized protein (57 aa).

Residues 34–54 (AALLDAAALVVIPGLLTAAAV) form a helical membrane-spanning segment.

It is found in the membrane. This is an uncharacterized protein from Dictyostelium discoideum (Social amoeba).